The chain runs to 383 residues: Thioredoxin reductase 2 (383 aa).

Residues 66 to 69 (SGPA), 87 to 88 (FE), 95 to 100 (IAPGGQ), Asn109, Val142, Cys200, Asp345, and 352 to 354 (RQA) each bind FAD. Cys197 and Cys200 are joined by a disulfide.

The protein belongs to the class-II pyridine nucleotide-disulfide oxidoreductase family. As to quaternary structure, homodimer. FAD serves as cofactor.

It is found in the cytoplasm. The protein resides in the mitochondrion matrix. It carries out the reaction [thioredoxin]-dithiol + NADP(+) = [thioredoxin]-disulfide + NADPH + H(+). In terms of biological role, possesses thioredoxin-disulfide reductase activity towards thioredoxins O1, O2 and F3. In Arabidopsis thaliana (Mouse-ear cress), this protein is Thioredoxin reductase 2 (NTR2).